The following is a 97-amino-acid chain: Large ribosomal subunit protein eL21 (97 aa).

This sequence belongs to the eukaryotic ribosomal protein eL21 family.

The protein is Large ribosomal subunit protein eL21 (rpl21e) of Archaeoglobus fulgidus (strain ATCC 49558 / DSM 4304 / JCM 9628 / NBRC 100126 / VC-16).